Here is a 185-residue protein sequence, read N- to C-terminus: MISSNDFRSGTTIEIDGSVWRVVEFLHVKPGKGSAFVRTKLKNVQTGNVVERTFRAGETLPSATIEKRTMQHTYKEGDQFVFMDMETFEEATLTPVQMGDRAKYLKEGMEVNILFWNDQVLDIELPTSVILEITDTDPGVKGDTATGGTKPAIVETGAQVMVPLFISIGERIKVDTRDGSYLGRE.

This sequence belongs to the elongation factor P family.

It localises to the cytoplasm. The protein operates within protein biosynthesis; polypeptide chain elongation. Involved in peptide bond synthesis. Stimulates efficient translation and peptide-bond synthesis on native or reconstituted 70S ribosomes in vitro. Probably functions indirectly by altering the affinity of the ribosome for aminoacyl-tRNA, thus increasing their reactivity as acceptors for peptidyl transferase. This chain is Elongation factor P, found in Microcystis aeruginosa (strain NIES-843 / IAM M-2473).